The primary structure comprises 228 residues: Thymidylate kinase (228 aa).

Residue 20–27 coordinates ATP; that stretch reads GGEGSGKS.

It belongs to the thymidylate kinase family.

The catalysed reaction is dTMP + ATP = dTDP + ADP. Its function is as follows. Phosphorylation of dTMP to form dTDP in both de novo and salvage pathways of dTTP synthesis. This Afipia carboxidovorans (strain ATCC 49405 / DSM 1227 / KCTC 32145 / OM5) (Oligotropha carboxidovorans) protein is Thymidylate kinase.